The chain runs to 277 residues: Undecaprenyl-diphosphatase (277 aa).

6 consecutive transmembrane segments (helical) span residues Phe47–Ile67, Ala85–Ile105, Trp108–Trp128, Phe187–Tyr207, Val218–Leu238, and Phe249–Ile269.

This sequence belongs to the UppP family.

It localises to the cell inner membrane. It carries out the reaction di-trans,octa-cis-undecaprenyl diphosphate + H2O = di-trans,octa-cis-undecaprenyl phosphate + phosphate + H(+). In terms of biological role, catalyzes the dephosphorylation of undecaprenyl diphosphate (UPP). Confers resistance to bacitracin. The chain is Undecaprenyl-diphosphatase from Pseudomonas aeruginosa (strain ATCC 15692 / DSM 22644 / CIP 104116 / JCM 14847 / LMG 12228 / 1C / PRS 101 / PAO1).